Reading from the N-terminus, the 94-residue chain is MIRDVLVGIVKGYRLLLSPWLGSSCRFEPTCSAYSLQALQTHGAAAGSYLTLTRLARCHPWCAGGSDPVPSEKPRFKSQLFTQLIHPSSEKKSS.

The protein belongs to the UPF0161 family.

The protein localises to the cell inner membrane. Could be involved in insertion of integral membrane proteins into the membrane. The protein is Putative membrane protein insertion efficiency factor of Albidiferax ferrireducens (strain ATCC BAA-621 / DSM 15236 / T118) (Rhodoferax ferrireducens).